The primary structure comprises 435 residues: NAD-specific glutamate dehydrogenase A (435 aa).

The segment at 1-28 (MTMASKSDSTHDESGDEAADSTEPESAL) is disordered. Residues 14–23 (SGDEAADSTE) are compositionally biased toward acidic residues. The active site involves Lys126.

This sequence belongs to the Glu/Leu/Phe/Val dehydrogenases family. As to quaternary structure, homohexamer. The N-terminus is blocked.

The catalysed reaction is L-glutamate + NAD(+) + H2O = 2-oxoglutarate + NH4(+) + NADH + H(+). Inhibited by ethanol, acetone, acetonitrile and 2-propanol (65 to 70% inhibition) and to a lesser extent by methanol and dimethyl formamide (26 and 49 % inhibition respectively). No effect of glycerol or DMSO. The protein is NAD-specific glutamate dehydrogenase A (gdhX) of Halobacterium salinarum (Halobacterium halobium).